A 351-amino-acid polypeptide reads, in one-letter code: Methylthioribose-1-phosphate isomerase (351 aa).

Substrate-binding positions include 55–57 (RGA), Arg-95, and Gln-202. Asp-243 functions as the Proton donor in the catalytic mechanism. 253 to 254 (NK) is a substrate binding site.

It belongs to the eIF-2B alpha/beta/delta subunits family. MtnA subfamily.

The enzyme catalyses 5-(methylsulfanyl)-alpha-D-ribose 1-phosphate = 5-(methylsulfanyl)-D-ribulose 1-phosphate. It participates in amino-acid biosynthesis; L-methionine biosynthesis via salvage pathway; L-methionine from S-methyl-5-thio-alpha-D-ribose 1-phosphate: step 1/6. In terms of biological role, catalyzes the interconversion of methylthioribose-1-phosphate (MTR-1-P) into methylthioribulose-1-phosphate (MTRu-1-P). The polypeptide is Methylthioribose-1-phosphate isomerase (Marinobacter nauticus (strain ATCC 700491 / DSM 11845 / VT8) (Marinobacter aquaeolei)).